Consider the following 1297-residue polypeptide: Phosphoribosylformylglycinamidine synthase (1297 aa).

Residues 301-329 (TAISPFPGAATGSGGEIRDEGATGRGAKP) are disordered. 308-319 (GAATGSGGEIRD) provides a ligand contact to ATP. Mg(2+)-binding residues include Asp-680, Glu-719, Asn-723, and Asp-887. Ser-889 is an ATP binding site. One can recognise a Glutamine amidotransferase type-1 domain in the interval 1045-1297 (IAILREQGVN…RLFRNARMVF (253 aa)). Cys-1138 serves as the catalytic Nucleophile. Active-site residues include His-1263 and Glu-1265.

It in the N-terminal section; belongs to the FGAMS family. As to quaternary structure, monomer.

The protein resides in the cytoplasm. The enzyme catalyses N(2)-formyl-N(1)-(5-phospho-beta-D-ribosyl)glycinamide + L-glutamine + ATP + H2O = 2-formamido-N(1)-(5-O-phospho-beta-D-ribosyl)acetamidine + L-glutamate + ADP + phosphate + H(+). The protein operates within purine metabolism; IMP biosynthesis via de novo pathway; 5-amino-1-(5-phospho-D-ribosyl)imidazole from N(2)-formyl-N(1)-(5-phospho-D-ribosyl)glycinamide: step 1/2. Phosphoribosylformylglycinamidine synthase involved in the purines biosynthetic pathway. Catalyzes the ATP-dependent conversion of formylglycinamide ribonucleotide (FGAR) and glutamine to yield formylglycinamidine ribonucleotide (FGAM) and glutamate. The chain is Phosphoribosylformylglycinamidine synthase from Haemophilus influenzae (strain ATCC 51907 / DSM 11121 / KW20 / Rd).